The sequence spans 128 residues: Disintegrin ocellatusin (128 aa).

Residues 1–20 form the signal peptide; sequence MIPVLLVTICLAVFPFQGSS. A propeptide spanning residues 21–65 is cleaved from the precursor; it reads IILESGNINDYEIVYPKKVAVLPTGAMNSAHPCYDPVTCQPKEKE. Residues 26-112 enclose the Disintegrin domain; it reads GNINDYEIVY…DCPRNPYKGE (87 aa). 5 disulfides stabilise this stretch: Cys-53–Cys-59, Cys-67–Cys-76, Cys-72–Cys-97, Cys-73–Cys-102, and Cys-85–Cys-104. Residues 89–91 carry the Cell attachment site motif; the sequence is RGD. A propeptide spanning residues 116 to 128 is cleaved from the precursor; that stretch reads MEWPAPAKGSVLM.

Monomer. As to expression, expressed by the venom gland.

It localises to the secreted. In terms of biological role, the disintegrin ocellatusin-10c1 is a poor inhibitor of platelet aggregation. The disintegrin inhibits the adhesion of cells expressing the RGD-dependent integrin alpha-5/beta-1 (ITGA5/ITGB1) to immobilized fibronectin. Inhibition on alpha-2b/beta-3 (ITGA2B/ITGB3) is low, and there is no inhibition on alpha-1/beta-1 (ITGA1/ITGB1), alpha-2/beta-1 (ITGA2/ITGB1) and alpha-6/beta-1 (ITGA6/ITGB1). Functionally, the short monomeric disintegrin ocellatusin inhibits ADP-induced platelet aggregation (IC(50)=168 nM). Inhibits alpha-5/beta-1 (ITGA5/ITGB1) integrin and induces the expression of a ligand-induced binding site epitope on beta-1 integrin subunit. Has a direct chemotactic stimulus on human neutrophils in vitro. This chain is Disintegrin ocellatusin, found in Echis ocellatus (Ocellated saw-scaled viper).